Consider the following 1457-residue polypeptide: ABC transporter G family member 36 (1457 aa).

The tract at residues 14 to 43 (RLGGSMRGDSGSMWRRGDDVFSRSSREEDD) is disordered. Positions 28–39 (RRGDDVFSRSSR) are enriched in basic and acidic residues. The 274-residue stretch at 164-437 (GNALGILPNR…FESTGFKCPD (274 aa)) folds into the ABC transporter 1 domain. ATP is bound at residue 197 to 204 (GPPGSGKT). The ABC transmembrane type-2 1 domain occupies 515-728 (ELLKANIDRE…AQNAISVNEL (214 aa)). Helical transmembrane passes span 533-553 (FVYM…MTLF), 565-585 (SGGI…FNGF), 621-641 (IPIT…VIGF), 653-673 (LLML…GGAA), 677-697 (IVAN…GGFI), 706-726 (WWIW…ISVN), and 765-785 (IGFG…TLAL). Residues 821 to 841 (SSGSTRRPMGNGTENDSTIVD) are disordered. The 253-residue stretch at 860 to 1112 (LSFDNVRYSV…ELIKYFESIP (253 aa)) folds into the ABC transporter 2 domain. ATP is bound at residue 905 to 912 (GVSGAGKT). An ABC transmembrane type-2 2 domain is found at 1185–1399 (TQCMACLWKQ…TLYGLVVSQF (215 aa)). 7 helical membrane passes run 1209-1229 (FFFT…LGGK), 1244-1264 (YAAV…VVAV), 1292-1312 (IPYT…MIGF), 1319-1339 (FFWY…YGMM), 1349-1369 (IASI…GFVI), 1380-1400 (WYCW…SQFG), and 1429-1449 (WVAT…GFAI).

It belongs to the ABC transporter superfamily. ABCG family. PDR (TC 3.A.1.205) subfamily.

The protein resides in the membrane. Its function is as follows. May be a general defense protein. This Oryza sativa subsp. indica (Rice) protein is ABC transporter G family member 36.